Reading from the N-terminus, the 213-residue chain is Protein-L-isoaspartate O-methyltransferase (213 aa).

Ser-62 is a catalytic residue.

This sequence belongs to the methyltransferase superfamily. L-isoaspartyl/D-aspartyl protein methyltransferase family.

Its subcellular location is the cytoplasm. It carries out the reaction [protein]-L-isoaspartate + S-adenosyl-L-methionine = [protein]-L-isoaspartate alpha-methyl ester + S-adenosyl-L-homocysteine. In terms of biological role, catalyzes the methyl esterification of L-isoaspartyl residues in peptides and proteins that result from spontaneous decomposition of normal L-aspartyl and L-asparaginyl residues. It plays a role in the repair and/or degradation of damaged proteins. The sequence is that of Protein-L-isoaspartate O-methyltransferase from Idiomarina loihiensis (strain ATCC BAA-735 / DSM 15497 / L2-TR).